Here is a 365-residue protein sequence, read N- to C-terminus: Peptide chain release factor 2 (365 aa).

N5-methylglutamine is present on Q252.

This sequence belongs to the prokaryotic/mitochondrial release factor family. Post-translationally, methylated by PrmC. Methylation increases the termination efficiency of RF2.

It localises to the cytoplasm. Functionally, peptide chain release factor 2 directs the termination of translation in response to the peptide chain termination codons UGA and UAA. In Shigella flexneri, this protein is Peptide chain release factor 2.